The chain runs to 62 residues: Kininogen-1 (62 aa).

Residues 1–22 (MDILKKSLFLVLFLGLVSFSIC) form the signal peptide. A disordered region spans residues 24-62 (EEKRDTEEEENDDEIEEESEEKKREAPERPPGFTPFRIY). A compositionally biased stretch (acidic residues) spans 30-42 (EEEENDDEIEEES). 4-hydroxyproline; partial is present on proline 54. Position 62 is a sulfotyrosine (tyrosine 62).

Belongs to the frog skin active peptide (FSAP) family. Bradykinin-related peptide subfamily. As to expression, expressed by the skin glands.

It localises to the secreted. In terms of biological role, inhibits ACE with a Ki of 1.6 uM, and targets B2 bradykinin receptor (BDKRB2). Provokes contraction of smooth muscle preparation (ileum). In vivo, induces an early hyperalgesic effects in living rats after intraplantar injection. This chain is Kininogen-1, found in Phyllomedusa sauvagei (Sauvage's leaf frog).